The primary structure comprises 228 residues: Ribose-5-phosphate isomerase A (228 aa).

Residues 29–32 (TGST), 85–88 (DGAD), and 98–101 (KGGG) each bind substrate. The Proton acceptor role is filled by Glu107. Substrate is bound at residue Lys125.

This sequence belongs to the ribose 5-phosphate isomerase family. Homodimer.

The catalysed reaction is aldehydo-D-ribose 5-phosphate = D-ribulose 5-phosphate. The protein operates within carbohydrate degradation; pentose phosphate pathway; D-ribose 5-phosphate from D-ribulose 5-phosphate (non-oxidative stage): step 1/1. Catalyzes the reversible conversion of ribose-5-phosphate to ribulose 5-phosphate. The polypeptide is Ribose-5-phosphate isomerase A (Staphylococcus aureus (strain MRSA252)).